The chain runs to 1093 residues: Small G protein signaling modulator 1 (1093 aa).

Residues 36–190 (HEDSSHIISF…EYTKMKTADH (155 aa)) enclose the RUN domain. The segment at 256–297 (LLYGKNNVLVQPRDDMEAVPGYLSLHQTADVMTLKWTPNQLM) is important for interaction with RAB9A and RAB9B. Positions 301-350 (VGDLDYEKSVYWDYAVTIRLEEIVYLHCHQQVDSGGTVVLVSQDGIQRPP) are required for interaction with RAP family members. 3 disordered regions span residues 377-412 (DPPLWSQRGKGKVFPKLRKRSPQGSSESTSSDKEDD), 645-778 (DSTI…ELAV), and 810-838 (DGAVMDGWPGEADKPSRADSEDNLSEEPE). Positions 385–397 (GKGKVFPKLRKRS) are enriched in basic residues. The Rab-GAP TBC domain maps to 562–1026 (GVQPEIRRAV…SVWETIWAAK (465 aa)). Residues 647–676 (TISNESSQSCSSGRQNLRLQSDSSSSTQVF) are compositionally biased toward polar residues. Residues 687–696 (AEGRSEEKHP) show a composition bias toward basic and acidic residues. Over residues 702-736 (NPANGTCSPDSGHPSSHNFSSGLSEHSEPSLSTED) the composition is skewed to polar residues. Composition is skewed to basic and acidic residues over residues 766-776 (TSRDEAPREEL) and 820-829 (EADKPSRADS).

The protein belongs to the RUTBC family. Interacts with RAB9A (GTP-bound form) and RAB9B. Interacts with RAB3A, RAB4A, RAB5A, RAB8A, RAB11A, RAP1A, RAP1B, RAP2A and RAP2B. No interaction with RAB27A. In terms of tissue distribution, expressed only in brain.

It is found in the golgi apparatus. The protein resides in the trans-Golgi network. It localises to the cytoplasm. The protein localises to the cytoplasmic vesicle membrane. Its function is as follows. Interacts with numerous Rab family members, functioning as Rab effector for some, and as GTPase activator for others. Promotes GTP hydrolysis by RAB34 and RAB36. Probably functions as a GTPase effector with RAB9A and RAB9B; does not stimulate GTP hydrolysis with RAB9A and RAB9B. The chain is Small G protein signaling modulator 1 (Sgsm1) from Mus musculus (Mouse).